The primary structure comprises 592 residues: Aspartate--tRNA ligase (592 aa).

Glu-180 provides a ligand contact to L-aspartate. Residues 204-207 form an aspartate region; that stretch reads QLFK. L-aspartate is bound at residue Arg-226. Residues 226–228 and Gln-235 each bind ATP; that span reads RDE. His-455 is an L-aspartate binding site. Glu-489 is a binding site for ATP. L-aspartate is bound at residue Arg-496. Residue 541–544 coordinates ATP; sequence GFDR.

The protein belongs to the class-II aminoacyl-tRNA synthetase family. Type 1 subfamily. As to quaternary structure, homodimer.

The protein localises to the cytoplasm. The catalysed reaction is tRNA(Asp) + L-aspartate + ATP = L-aspartyl-tRNA(Asp) + AMP + diphosphate. Catalyzes the attachment of L-aspartate to tRNA(Asp) in a two-step reaction: L-aspartate is first activated by ATP to form Asp-AMP and then transferred to the acceptor end of tRNA(Asp). The polypeptide is Aspartate--tRNA ligase (Clostridium tetani (strain Massachusetts / E88)).